A 36-amino-acid polypeptide reads, in one-letter code: Cytochrome b6-f complex subunit 7 (36 aa).

The helical transmembrane segment at 9-29 (NGAFIMIGLTLLGLAWGFVII) threads the bilayer.

The protein belongs to the PetM family. As to quaternary structure, the 4 large subunits of the cytochrome b6-f complex are cytochrome b6, subunit IV (17 kDa polypeptide, PetD), cytochrome f and the Rieske protein, while the 4 small subunits are PetG, PetL, PetM and PetN. The complex functions as a dimer.

The protein resides in the cellular thylakoid membrane. Functionally, component of the cytochrome b6-f complex, which mediates electron transfer between photosystem II (PSII) and photosystem I (PSI), cyclic electron flow around PSI, and state transitions. The chain is Cytochrome b6-f complex subunit 7 from Synechocystis sp. (strain ATCC 27184 / PCC 6803 / Kazusa).